Consider the following 993-residue polypeptide: MVESKIIKLLEQVQSADPNSRIQAELGLRDLEKYHDFAAKLTDIASSGASVPLRQGSLIYLQRYIVHHWSPLFEQFQDGPIPDENVKKHVRETLLHLLVSLDNFTLIKAVAYAVSLIANVDYPDEWPEVVPAVLHLLQSTNENSINASLDVLDELVDESLVEEQFFIIAPQLASILYQFIFSAPPNDSMRMLQARGIKLFRSCLELIEIYKETKAEHVRVFLEQILPPWMDMFSHKFEVSLVDDRQVILPDSCGYFCIMGEIAMTLTKLRELFPSKLTPYVVTFVELVWNIIEKLLDPYIREVVFSDGLDDSAFGDKYPIRYLVELLLFVSVALQSKFVQNLFVSNTVPVPPLPPCIPLLVQYTQLPKHQIEVYESDVSEYIANEFSMDFASDTVRGAAISVLSAFEEHTTLPIQQSLREMSATYILNNEINWIYQEALLYACCSVDAASDDTYDDYLDPIYEAIKVRIDYSDAPILLLSRFFLFIGYFSESTVVASQFFQIIMNNLVNALQVDTVQYAAMKAIERFCSVGKVKPILSLQPMILEVLSQYASKSSDEALVLLVEAISSAVKLDCAKAAELGNSVIPLLFNLVATNASDPYICGIIEDTFEDIIHAANNYESMCEITLPELLQVLNQEDPIMVNIGATLLSCLIRAGPSPLPNGFVGYVLPPVYKITQIHSGDTELLQLSQEILKGLLEKDTPQLLETEISGSSGFQYILFILHQLLDKESDDSACFLVGPILLELADHASQMVDLQSILLSCIKRLAIAEQPRFIQSIIYVFAKLIVKDSLGMMHFLTSSLLNEQGLTAFEVLMTVWCDNFVYFSNFKNISIICIAMTKIYSFDSPLLDSVQVKGELISHSNRIITRSQSKLHPEEYSYVSVGEKILRLLSEEFVSLSKDAIVEEVSDDGADDWDDGPISAETFGLSANDVNELSKDEFSGVDNSEDEDNTDLQFYLLEFFKEAMKSNLHNINEVVFRLPQEEQDALVQIKEK.

In terms of domain architecture, Importin N-terminal spans 24–100 (AELGLRDLEK…RETLLHLLVS (77 aa)).

It localises to the nucleus. Its function is as follows. Required for nuclear protein import and mediates docking of import substrate to distinct nucleoporins. Serves a receptor for nuclear localization signals. Mediates the nuclear import of TATA-binding protein (TBP) and of histones H2A and H2B. This chain is Importin subunit beta-5 (kap114), found in Schizosaccharomyces pombe (strain 972 / ATCC 24843) (Fission yeast).